A 228-amino-acid polypeptide reads, in one-letter code: L-ribulose-5-phosphate 4-epimerase UlaF (228 aa).

Substrate is bound by residues 26–27 (GN), 43–44 (SG), and 72–73 (SS). 3 residues coordinate Zn(2+): aspartate 74, histidine 93, and histidine 95. Catalysis depends on aspartate 118, which acts as the Proton donor/acceptor. Histidine 167 provides a ligand contact to Zn(2+). The active-site Proton donor/acceptor is the tyrosine 225.

The protein belongs to the aldolase class II family. AraD/FucA subfamily. Requires Zn(2+) as cofactor.

It carries out the reaction L-ribulose 5-phosphate = D-xylulose 5-phosphate. The protein operates within cofactor degradation; L-ascorbate degradation; D-xylulose 5-phosphate from L-ascorbate: step 4/4. In terms of biological role, catalyzes the isomerization of L-ribulose 5-phosphate to D-xylulose 5-phosphate. Is involved in the anaerobic L-ascorbate utilization. The polypeptide is L-ribulose-5-phosphate 4-epimerase UlaF (Escherichia coli (strain K12 / MC4100 / BW2952)).